We begin with the raw amino-acid sequence, 186 residues long: Tumor necrosis factor alpha-induced protein 8-like protein 1 (186 aa).

Positions Glu37–Leu70 form a coiled coil.

Belongs to the TNFAIP8 family.

The protein resides in the cytoplasm. This is Tumor necrosis factor alpha-induced protein 8-like protein 1 (tnfaip8l1) from Danio rerio (Zebrafish).